The primary structure comprises 238 residues: Aerobic respiration control protein ArcA (238 aa).

The 114-residue stretch at 5–118 (HILIVEDELV…ELTIRARNLL (114 aa)) folds into the Response regulatory domain. The residue at position 54 (D54) is a 4-aspartylphosphate. The segment at residues 134-234 (VESYKFNGWE…IHGEGYRFCG (101 aa)) is a DNA-binding region (ompR/PhoB-type).

Phosphorylated by ArcB.

Its subcellular location is the cytoplasm. Functionally, member of the two-component regulatory system ArcB/ArcA. Represses a wide variety of aerobic enzymes under anaerobic conditions. It may also be involved in the osmoregulation of envelope proteins. When activated by ArcB, it negatively regulates the expression of genes of aerobic function. Activates the transcription of the plfB operon by binding to its promoter. The polypeptide is Aerobic respiration control protein ArcA (arcA) (Escherichia coli O157:H7).